The sequence spans 421 residues: F-box protein At2g17690 (421 aa).

The region spanning 2 to 50 is the F-box domain; that stretch reads GDWSKLPEELLGLIALRLYSVIELIRFRSICKSWRSSASGVNKNHSLSS.

Involved in heat stress response. Contributes to recovery from heat stress. In Arabidopsis thaliana (Mouse-ear cress), this protein is F-box protein At2g17690.